The primary structure comprises 426 residues: MKLLILGNHTCGNRGDSAILRGLLDAINILNPHAEVDVMSRYPVSSSWLLNRPVMGDPLFLQMKQHNSAAGVVGRVKKVLRRRYQHQVLLSRVTDTGKLRNIAIAQGFTDFVRLLSGYDAIIQVGGSFFVDLYGVPQFEHALCTFMAKKPLFMIGHSVGPFQDEQFNQLANYVFGHCDALILRESVSFDLMKRSNITTAKVEHGVDTAWLVDHHTEDFTASYAVQHWLDVAAQQKTVAITLRELAPFDKRLGTTQQAYEKAFAGVVNRILDEGYQVIALSTCTGIDSYNKDDRMVALNLRQHISDPARYHVVMDELNDLEMGKILGACELTVGTRLHSAIISMNFATPAIAINYEHKSAGIMQQLGLPEMAIDIRHLLDGSLQAMVADTLGQLPALNARLSEAVSRERQTGMQMVQSVLERIGEVK.

It belongs to the polysaccharide pyruvyl transferase family.

It participates in slime biogenesis; slime polysaccharide biosynthesis. The chain is Colanic acid biosynthesis protein WcaK (wcaK) from Escherichia coli (strain K12).